A 291-amino-acid polypeptide reads, in one-letter code: Phosphate import ATP-binding protein PstB (291 aa).

The span at 1–17 shows a compositional bias: basic and acidic residues; it reads MANTNVKEKELAKHTDQ. Positions 1–40 are disordered; that stretch reads MANTNVKEKELAKHTDQSQESISTVVSSNEVKHNKESDSN. A compositionally biased stretch (polar residues) spans 18 to 29; it reads SQESISTVVSSN. Positions 30-40 are enriched in basic and acidic residues; sequence EVKHNKESDSN. In terms of domain architecture, ABC transporter spans 45 to 286; it reads YSTQNLDLWY…PSDKQTEDYI (242 aa). ATP is bound at residue 77–84; it reads GPSGCGKS.

Belongs to the ABC transporter superfamily. Phosphate importer (TC 3.A.1.7) family. The complex is composed of two ATP-binding proteins (PstB), two transmembrane proteins (PstC and PstA) and a solute-binding protein (PstS).

It localises to the cell membrane. It carries out the reaction phosphate(out) + ATP + H2O = ADP + 2 phosphate(in) + H(+). Part of the ABC transporter complex PstSACB involved in phosphate import. Responsible for energy coupling to the transport system. This Staphylococcus haemolyticus (strain JCSC1435) protein is Phosphate import ATP-binding protein PstB.